A 390-amino-acid chain; its full sequence is Chorismate synthase (390 aa).

NADP(+) is bound by residues Arg40 and Arg46. Residues 128 to 130 (RAS), 251 to 252 (QA), Gly296, 311 to 315 (KPIPT), and Arg339 each bind FMN.

This sequence belongs to the chorismate synthase family. Homotetramer. Requires FMNH2 as cofactor.

It carries out the reaction 5-O-(1-carboxyvinyl)-3-phosphoshikimate = chorismate + phosphate. Its pathway is metabolic intermediate biosynthesis; chorismate biosynthesis; chorismate from D-erythrose 4-phosphate and phosphoenolpyruvate: step 7/7. Catalyzes the anti-1,4-elimination of the C-3 phosphate and the C-6 proR hydrogen from 5-enolpyruvylshikimate-3-phosphate (EPSP) to yield chorismate, which is the branch point compound that serves as the starting substrate for the three terminal pathways of aromatic amino acid biosynthesis. This reaction introduces a second double bond into the aromatic ring system. In Sulfurihydrogenibium sp. (strain YO3AOP1), this protein is Chorismate synthase.